We begin with the raw amino-acid sequence, 441 residues long: ATP-dependent protease ATPase subunit HslU (441 aa).

ATP-binding positions include I18, 60 to 65 (GVGKTE), D254, E319, and R391.

The protein belongs to the ClpX chaperone family. HslU subfamily. In terms of assembly, a double ring-shaped homohexamer of HslV is capped on each side by a ring-shaped HslU homohexamer. The assembly of the HslU/HslV complex is dependent on binding of ATP.

The protein localises to the cytoplasm. Functionally, ATPase subunit of a proteasome-like degradation complex; this subunit has chaperone activity. The binding of ATP and its subsequent hydrolysis by HslU are essential for unfolding of protein substrates subsequently hydrolyzed by HslV. HslU recognizes the N-terminal part of its protein substrates and unfolds these before they are guided to HslV for hydrolysis. The chain is ATP-dependent protease ATPase subunit HslU from Shewanella sediminis (strain HAW-EB3).